Reading from the N-terminus, the 255-residue chain is 5-oxoprolinase subunit A (255 aa).

This sequence belongs to the LamB/PxpA family. As to quaternary structure, forms a complex composed of PxpA, PxpB and PxpC.

It catalyses the reaction 5-oxo-L-proline + ATP + 2 H2O = L-glutamate + ADP + phosphate + H(+). Functionally, catalyzes the cleavage of 5-oxoproline to form L-glutamate coupled to the hydrolysis of ATP to ADP and inorganic phosphate. The chain is 5-oxoprolinase subunit A from Thermococcus sibiricus (strain DSM 12597 / MM 739).